Reading from the N-terminus, the 472-residue chain is Glycogen synthase (472 aa).

Lys16 contacts ADP-alpha-D-glucose.

Belongs to the glycosyltransferase 1 family. Bacterial/plant glycogen synthase subfamily.

It catalyses the reaction [(1-&gt;4)-alpha-D-glucosyl](n) + ADP-alpha-D-glucose = [(1-&gt;4)-alpha-D-glucosyl](n+1) + ADP + H(+). It functions in the pathway glycan biosynthesis; glycogen biosynthesis. Its function is as follows. Synthesizes alpha-1,4-glucan chains using ADP-glucose. This is Glycogen synthase from Jannaschia sp. (strain CCS1).